Reading from the N-terminus, the 181-residue chain is Interleukin-24 (181 aa).

The N-terminal stretch at 1–26 (MSWGLQILPCLSLILLLWNQVPGLEG) is a signal peptide. Cys34 and Cys81 form a disulfide bridge. Asn74 is a glycosylation site (N-linked (GlcNAc...) asparagine). Residue Lys97 forms a Glycyl lysine isopeptide (Lys-Gly) (interchain with G-Cter in ubiquitin) linkage.

Belongs to the IL-10 family. In terms of processing, glycosylated. Ubiquitination at Lys-97 promotes proteasomal degradation. As to expression, selectively expressed by Th2 cells. Expressed in the liver.

The protein resides in the secreted. Its function is as follows. Multifunctional cytokine mainly produced by T-cells that plays a regulatory role in immune response, tissue homeostasis, host defense, and oncogenesis. Possesses antiviral functions and induces the type I interferon response during influenza infection. Signals through two receptor complexes IL20RA/IL20RB or IL20RB/IL22RA1. In turn, stimulates the JAK1-STAT3 and MAPK pathways and promotes the secretion of pro-inflammatory mediators including IL8 and MMP1. Intracellularly, maintains endoplasmic reticulum homeostasis by restricting the eIF2alpha-CHOP pathway-mediated stress signal. In addition, acts as a quality control mechanism for the ubiquitin proteasome system by alerting the cell to proteasome dysfunction through activation of PKR/EIF2AK2. The chain is Interleukin-24 (Il24) from Mus musculus (Mouse).